A 303-amino-acid polypeptide reads, in one-letter code: UDP-3-O-acyl-N-acetylglucosamine deacetylase (303 aa).

Residues H78, H237, and D241 each coordinate Zn(2+). The active-site Proton donor is H264.

This sequence belongs to the LpxC family. Requires Zn(2+) as cofactor.

The enzyme catalyses a UDP-3-O-[(3R)-3-hydroxyacyl]-N-acetyl-alpha-D-glucosamine + H2O = a UDP-3-O-[(3R)-3-hydroxyacyl]-alpha-D-glucosamine + acetate. It participates in glycolipid biosynthesis; lipid IV(A) biosynthesis; lipid IV(A) from (3R)-3-hydroxytetradecanoyl-[acyl-carrier-protein] and UDP-N-acetyl-alpha-D-glucosamine: step 2/6. Functionally, catalyzes the hydrolysis of UDP-3-O-myristoyl-N-acetylglucosamine to form UDP-3-O-myristoylglucosamine and acetate, the committed step in lipid A biosynthesis. The chain is UDP-3-O-acyl-N-acetylglucosamine deacetylase from Pseudomonas fluorescens (strain ATCC BAA-477 / NRRL B-23932 / Pf-5).